Here is an 842-residue protein sequence, read N- to C-terminus: Protein translocase subunit SecA (842 aa).

Residues glutamine 85, 103 to 107, and aspartate 493 each bind ATP; that span reads GEGKT. Residues cysteine 825, cysteine 827, cysteine 836, and histidine 837 each coordinate Zn(2+).

The protein belongs to the SecA family. In terms of assembly, monomer and homodimer. Part of the essential Sec protein translocation apparatus which comprises SecA, SecYEG and auxiliary proteins SecDF. Other proteins may also be involved. Zn(2+) is required as a cofactor.

It is found in the cell membrane. It localises to the cytoplasm. It carries out the reaction ATP + H2O + cellular proteinSide 1 = ADP + phosphate + cellular proteinSide 2.. Part of the Sec protein translocase complex. Interacts with the SecYEG preprotein conducting channel. Has a central role in coupling the hydrolysis of ATP to the transfer of proteins into and across the cell membrane, serving as an ATP-driven molecular motor driving the stepwise translocation of polypeptide chains across the membrane. This chain is Protein translocase subunit SecA, found in Streptococcus equi subsp. equi (strain 4047).